The primary structure comprises 373 residues: Phospho-N-acetylmuramoyl-pentapeptide-transferase (373 aa).

The next 10 helical transmembrane spans lie at 28-48, 72-92, 94-114, 135-155, 177-197, 212-232, 252-272, 276-296, 301-321, and 350-370; these read LLTV…TIAY, TPTM…LCWA, LANP…AVGW, YFWL…IASQ, IVPL…YFVI, GLAI…SYVS, VTIV…YNAH, VFMG…IAVM, IAFA…ILQV, and QVVV…LMTL.

Belongs to the glycosyltransferase 4 family. MraY subfamily. Mg(2+) serves as cofactor.

It localises to the cell inner membrane. The enzyme catalyses UDP-N-acetyl-alpha-D-muramoyl-L-alanyl-gamma-D-glutamyl-meso-2,6-diaminopimeloyl-D-alanyl-D-alanine + di-trans,octa-cis-undecaprenyl phosphate = di-trans,octa-cis-undecaprenyl diphospho-N-acetyl-alpha-D-muramoyl-L-alanyl-D-glutamyl-meso-2,6-diaminopimeloyl-D-alanyl-D-alanine + UMP. The protein operates within cell wall biogenesis; peptidoglycan biosynthesis. Functionally, catalyzes the initial step of the lipid cycle reactions in the biosynthesis of the cell wall peptidoglycan: transfers peptidoglycan precursor phospho-MurNAc-pentapeptide from UDP-MurNAc-pentapeptide onto the lipid carrier undecaprenyl phosphate, yielding undecaprenyl-pyrophosphoryl-MurNAc-pentapeptide, known as lipid I. The sequence is that of Phospho-N-acetylmuramoyl-pentapeptide-transferase from Psychrobacter sp. (strain PRwf-1).